The sequence spans 488 residues: Cardiolipin synthase 2 (488 aa).

Transmembrane regions (helical) follow at residues 8–28 and 39–59; these read IIINILLVSAFLLNLVFAFII and IWAWLLVLVFLPLVGFILYLL. 2 PLD phosphodiesterase domains span residues 223–250 and 401–428; these read MNNRNHRKIVVIDGTIGYVGGFNVGDEY and DNGFLHSKTLVIDDEVASVGTANMDNRS. Residues His-228, Lys-230, Asp-235, His-406, Lys-408, and Asp-413 contribute to the active site.

Belongs to the phospholipase D family. Cardiolipin synthase subfamily.

It localises to the cell membrane. It catalyses the reaction 2 a 1,2-diacyl-sn-glycero-3-phospho-(1'-sn-glycerol) = a cardiolipin + glycerol. Its function is as follows. Catalyzes the reversible phosphatidyl group transfer from one phosphatidylglycerol molecule to another to form cardiolipin (CL) (diphosphatidylglycerol) and glycerol. The polypeptide is Cardiolipin synthase 2 (cls2) (Staphylococcus epidermidis (strain ATCC 35984 / DSM 28319 / BCRC 17069 / CCUG 31568 / BM 3577 / RP62A)).